The sequence spans 682 residues: Potassium-transporting ATPase ATP-binding subunit (682 aa).

Transmembrane regions (helical) follow at residues 35-55 (VMFIVWVGSLLTTLLAIAMAG), 62-82 (ATFTAAVSIWLWFTVLFANFA), 219-239 (IALTILLIALTLVFLLATATI), and 254-274 (VLVALLVCLIPTTIGGLLSAI). Asp307 functions as the 4-aspartylphosphate intermediate in the catalytic mechanism. Residues Asp344, Glu348, 377-384 (FTAQTRMS), and Lys395 each bind ATP. Positions 518 and 522 each coordinate Mg(2+). 3 consecutive transmembrane segments (helical) span residues 588-608 (FAIIPAAFAAVYPQLAMLNVM), 616-636 (AILSAVIFNALIIVFLIPLAL), and 656-676 (IYGLGGLLVPFIGIKAIDLLL).

Belongs to the cation transport ATPase (P-type) (TC 3.A.3) family. Type IA subfamily. As to quaternary structure, the system is composed of three essential subunits: KdpA, KdpB and KdpC.

It is found in the cell inner membrane. The catalysed reaction is K(+)(out) + ATP + H2O = K(+)(in) + ADP + phosphate + H(+). Functionally, part of the high-affinity ATP-driven potassium transport (or Kdp) system, which catalyzes the hydrolysis of ATP coupled with the electrogenic transport of potassium into the cytoplasm. This subunit is responsible for energy coupling to the transport system and for the release of the potassium ions to the cytoplasm. This is Potassium-transporting ATPase ATP-binding subunit from Klebsiella pneumoniae subsp. pneumoniae (strain ATCC 700721 / MGH 78578).